A 251-amino-acid chain; its full sequence is Probable transcriptional regulatory protein MMAR_2098 (251 aa).

The protein belongs to the TACO1 family.

It localises to the cytoplasm. This is Probable transcriptional regulatory protein MMAR_2098 from Mycobacterium marinum (strain ATCC BAA-535 / M).